The sequence spans 120 residues: MFVLSGYEYLLGFLIICSLVPALALSASKLLRPTGNSLERRTTYESGMEPIGGAWIQFNIRYYMFALVFVVFDVETVFLYPWAVAFHRLGLLAFIEALIFIAILVVALVYAWRKGALEWS.

3 helical membrane-spanning segments follow: residues 1–21, 64–84, and 89–109; these read MFVL…SLVP, MFAL…PWAV, and LGLL…VALV.

It belongs to the complex I subunit 3 family. In terms of assembly, NDH-1 can be composed of about 15 different subunits; different subcomplexes with different compositions have been identified which probably have different functions.

The protein localises to the cellular thylakoid membrane. The enzyme catalyses a plastoquinone + NADH + (n+1) H(+)(in) = a plastoquinol + NAD(+) + n H(+)(out). It catalyses the reaction a plastoquinone + NADPH + (n+1) H(+)(in) = a plastoquinol + NADP(+) + n H(+)(out). In terms of biological role, NDH-1 shuttles electrons from an unknown electron donor, via FMN and iron-sulfur (Fe-S) centers, to quinones in the respiratory and/or the photosynthetic chain. The immediate electron acceptor for the enzyme in this species is believed to be plastoquinone. Couples the redox reaction to proton translocation, and thus conserves the redox energy in a proton gradient. Cyanobacterial NDH-1 also plays a role in inorganic carbon-concentration. The protein is NAD(P)H-quinone oxidoreductase subunit 3 of Trichormus variabilis (strain ATCC 29413 / PCC 7937) (Anabaena variabilis).